The sequence spans 100 residues: Small ribosomal subunit protein uS14c (100 aa).

It belongs to the universal ribosomal protein uS14 family. In terms of assembly, part of the 30S ribosomal subunit.

The protein resides in the plastid. Its subcellular location is the chloroplast. Its function is as follows. Binds 16S rRNA, required for the assembly of 30S particles. The chain is Small ribosomal subunit protein uS14c from Cicer arietinum (Chickpea).